Consider the following 399-residue polypeptide: Acetylornithine aminotransferase (399 aa).

Pyridoxal 5'-phosphate is bound by residues 102–103 and Phe135; that span reads GA. Residue Arg138 participates in N(2)-acetyl-L-ornithine binding. 220-223 contributes to the pyridoxal 5'-phosphate binding site; that stretch reads DEIQ. Residue Lys249 is modified to N6-(pyridoxal phosphate)lysine. Ser277 contacts N(2)-acetyl-L-ornithine. Thr278 contacts pyridoxal 5'-phosphate.

The protein belongs to the class-III pyridoxal-phosphate-dependent aminotransferase family. ArgD subfamily. Homodimer. It depends on pyridoxal 5'-phosphate as a cofactor.

It localises to the cytoplasm. It catalyses the reaction N(2)-acetyl-L-ornithine + 2-oxoglutarate = N-acetyl-L-glutamate 5-semialdehyde + L-glutamate. It participates in amino-acid biosynthesis; L-arginine biosynthesis; N(2)-acetyl-L-ornithine from L-glutamate: step 4/4. This chain is Acetylornithine aminotransferase, found in Oceanobacillus iheyensis (strain DSM 14371 / CIP 107618 / JCM 11309 / KCTC 3954 / HTE831).